The following is a 199-amino-acid chain: Small ribosomal subunit protein uS7 (199 aa).

Belongs to the universal ribosomal protein uS7 family. Part of the 30S ribosomal subunit.

In terms of biological role, one of the primary rRNA binding proteins, it binds directly to 16S rRNA where it nucleates assembly of the head domain of the 30S subunit. Is located at the subunit interface close to the decoding center. The protein is Small ribosomal subunit protein uS7 of Cenarchaeum symbiosum (strain A).